The following is a 204-amino-acid chain: DNA-binding transcriptional activator EvgA (204 aa).

The Response regulatory domain maps to asparagine 2 to lysine 117. 4-aspartylphosphate is present on aspartate 52. In terms of domain architecture, HTH luxR-type spans aspartate 137–lysine 202. Positions asparagine 161 to serine 180 form a DNA-binding region, H-T-H motif.

As to quaternary structure, homodimer. Post-translationally, phosphorylated by EvgS.

The protein resides in the cytoplasm. Functionally, member of the two-component regulatory system EvgS/EvgA. Regulates the expression of emrKY operon and yfdX. Also seems to control expression of at least one other multidrug efflux operon. The chain is DNA-binding transcriptional activator EvgA (evgA) from Escherichia coli O157:H7.